Reading from the N-terminus, the 121-residue chain is Large ribosomal subunit protein uL18 (121 aa).

Belongs to the universal ribosomal protein uL18 family. In terms of assembly, part of the 50S ribosomal subunit; part of the 5S rRNA/L5/L18/L25 subcomplex. Contacts the 5S and 23S rRNAs.

Its function is as follows. This is one of the proteins that bind and probably mediate the attachment of the 5S RNA into the large ribosomal subunit, where it forms part of the central protuberance. In Methylibium petroleiphilum (strain ATCC BAA-1232 / LMG 22953 / PM1), this protein is Large ribosomal subunit protein uL18.